A 354-amino-acid chain; its full sequence is Alkanal monooxygenase alpha chain (354 aa).

The protein belongs to the bacterial luciferase oxidoreductase family. As to quaternary structure, heterodimer of an alpha and a beta chain.

It catalyses the reaction a long-chain fatty aldehyde + FMNH2 + O2 = a long-chain fatty acid + hnu + FMN + H2O + 2 H(+). Light-emitting reaction in luminous bacteria. The protein is Alkanal monooxygenase alpha chain (luxA) of Aliivibrio fischeri (Vibrio fischeri).